The chain runs to 300 residues: Aspartate carbamoyltransferase catalytic subunit (300 aa).

Carbamoyl phosphate contacts are provided by arginine 50 and threonine 51. An L-aspartate-binding site is contributed by lysine 78. Residues arginine 100, histidine 127, and glutamine 130 each contribute to the carbamoyl phosphate site. 2 residues coordinate L-aspartate: arginine 160 and arginine 210. Carbamoyl phosphate contacts are provided by alanine 253 and proline 254.

It belongs to the aspartate/ornithine carbamoyltransferase superfamily. ATCase family. In terms of assembly, heterododecamer (2C3:3R2) of six catalytic PyrB chains organized as two trimers (C3), and six regulatory PyrI chains organized as three dimers (R2).

The catalysed reaction is carbamoyl phosphate + L-aspartate = N-carbamoyl-L-aspartate + phosphate + H(+). It functions in the pathway pyrimidine metabolism; UMP biosynthesis via de novo pathway; (S)-dihydroorotate from bicarbonate: step 2/3. Functionally, catalyzes the condensation of carbamoyl phosphate and aspartate to form carbamoyl aspartate and inorganic phosphate, the committed step in the de novo pyrimidine nucleotide biosynthesis pathway. This is Aspartate carbamoyltransferase catalytic subunit from Staphylococcus saprophyticus subsp. saprophyticus (strain ATCC 15305 / DSM 20229 / NCIMB 8711 / NCTC 7292 / S-41).